Consider the following 216-residue polypeptide: RNA chaperone ProQ (216 aa).

The span at 105-115 shows a compositional bias: basic and acidic residues; sequence ESKAKVAEKRK. The disordered stretch occupies residues 105-159; the sequence is ESKAKVAEKRKAQNAAKPGAKKSYKSKTVPAFKSSPKGTNQDNVKPKAKLPPPEK.

It belongs to the ProQ family.

It is found in the cytoplasm. Functionally, RNA chaperone with significant RNA binding, RNA strand exchange and RNA duplexing activities. The polypeptide is RNA chaperone ProQ (Pseudoalteromonas atlantica (strain T6c / ATCC BAA-1087)).